The following is a 286-amino-acid chain: Energy-coupling factor transporter ATP-binding protein EcfA2 (286 aa).

The ABC transporter domain occupies 3 to 246 (IQFNQVSYIY…KTQLLKWHIE (244 aa)). 40-47 (GQTGSGKS) provides a ligand contact to ATP.

The protein belongs to the ABC transporter superfamily. Energy-coupling factor EcfA family. In terms of assembly, forms a stable energy-coupling factor (ECF) transporter complex composed of 2 membrane-embedded substrate-binding proteins (S component), 2 ATP-binding proteins (A component) and 2 transmembrane proteins (T component).

The protein localises to the cell membrane. ATP-binding (A) component of a common energy-coupling factor (ECF) ABC-transporter complex. Unlike classic ABC transporters this ECF transporter provides the energy necessary to transport a number of different substrates. This Staphylococcus epidermidis (strain ATCC 35984 / DSM 28319 / BCRC 17069 / CCUG 31568 / BM 3577 / RP62A) protein is Energy-coupling factor transporter ATP-binding protein EcfA2.